A 286-amino-acid chain; its full sequence is Pantothenate synthetase (286 aa).

ATP is bound at residue 30-37 (MGNLHSGH). His-37 acts as the Proton donor in catalysis. Gln-61 provides a ligand contact to (R)-pantoate. Gln-61 is a beta-alanine binding site. Residue 149 to 152 (GQKD) coordinates ATP. Gln-155 serves as a coordination point for (R)-pantoate. ATP contacts are provided by residues Val-178 and 186-189 (LSSR).

Belongs to the pantothenate synthetase family. In terms of assembly, homodimer.

The protein localises to the cytoplasm. It carries out the reaction (R)-pantoate + beta-alanine + ATP = (R)-pantothenate + AMP + diphosphate + H(+). The protein operates within cofactor biosynthesis; (R)-pantothenate biosynthesis; (R)-pantothenate from (R)-pantoate and beta-alanine: step 1/1. Functionally, catalyzes the condensation of pantoate with beta-alanine in an ATP-dependent reaction via a pantoyl-adenylate intermediate. The protein is Pantothenate synthetase of Pseudomonas fluorescens (strain Pf0-1).